The primary structure comprises 398 residues: Alpha-ketoglutarate-dependent dioxygenase bsc9 (398 aa).

The Fe cation site is built by histidine 167 and aspartate 169. Threonine 212 lines the 2-oxoglutarate pocket. Histidine 365 is a Fe cation binding site. Arginine 377 serves as a coordination point for 2-oxoglutarate.

This sequence belongs to the TfdA dioxygenase family. Requires Fe(2+) as cofactor.

It participates in mycotoxin biosynthesis. Functionally, alpha-ketoglutarate dependent dioxygenase; part of the gene cluster that mediates the biosynthesis of the diterpene glucoside brassicicene C. In the first step of the brassicicene C biosynthesis, the bifunctional diterpene synthase bsc8 that possesses both prenyl transferase and terpene cyclase activity, converts isopentenyl diphosphate and dimethylallyl diphosphate into geranylgeranyl diphosphate (GGDP) that is further converted into fusicocca-2,10(14)-diene, the first precursor for brassicicene C. Fusicocca-2,10(14)-diene is then substrate of cytochrome P450 monooxygenase bsc1 for hydroxylation at the C-8 position. Oxidation at C-16 position to aldehyde is then catalyzed by the cytochrome P450 monooyxygenase bsc7, yielding fusicocca-2,10(14)-diene-8-beta,16-diol. Follows the isomerization of the double bond and reduction of aldehyde to alcohol catalyzed by the short-chain dehydrogenase/reductase bsc3 to yield the diol compound fusicocca-1,10(14)-diene-8 beta,16-diol. The next step is the oxidation at the C-3 position of fusicocca-2,10(14)-diene-8-beta,16-diol catalyzed by the alpha-ketoglutarate dependent dioxygenase bsc9, to produce a triol compound. Methylation of the hydroxy group at position 16 is performed by the methyltransferase bsc6. 16-O-methylation is followed by oxidation at the C-13 position to ketone and an alkyl shift of the methyl group leads to brassicicene C. Although the probable acetyltransferase bsc4 is included in the gene cluster, no acetylation reactions are necessary for brassicicene C biosynthesis. However, the fact that brassicicene E, which is a structurally related compound having an acetoxy group at position 12, was previously isolated from another strain of A.brassicicola suggests that the ATCC 96836 strain might also produce a small amount of brassicicene E. The chain is Alpha-ketoglutarate-dependent dioxygenase bsc9 from Alternaria brassicicola (Dark leaf spot agent).